The following is a 460-amino-acid chain: Bifunctional protein GlmU (460 aa).

Residues 1–235 (MALSAAIVLA…PLTVEGVNDR (235 aa)) form a pyrophosphorylase region. UDP-N-acetyl-alpha-D-glucosamine contacts are provided by residues 9-12 (LAAG), K23, Q76, and 81-82 (GT). D109 is a binding site for Mg(2+). UDP-N-acetyl-alpha-D-glucosamine-binding residues include G146, E161, N176, and N233. Position 233 (N233) interacts with Mg(2+). Residues 236–256 (VQLAALSKTYNRRVCERWMRN) form a linker region. The N-acetyltransferase stretch occupies residues 257-460 (GVTILDPETT…VEGWKPAWER (204 aa)). Residues R338 and K356 each coordinate UDP-N-acetyl-alpha-D-glucosamine. Residue H368 is the Proton acceptor of the active site. 2 residues coordinate UDP-N-acetyl-alpha-D-glucosamine: Y371 and N382. Acetyl-CoA contacts are provided by residues 391-392 (NY) and A428.

It in the N-terminal section; belongs to the N-acetylglucosamine-1-phosphate uridyltransferase family. This sequence in the C-terminal section; belongs to the transferase hexapeptide repeat family. As to quaternary structure, homotrimer. It depends on Mg(2+) as a cofactor.

It localises to the cytoplasm. The catalysed reaction is alpha-D-glucosamine 1-phosphate + acetyl-CoA = N-acetyl-alpha-D-glucosamine 1-phosphate + CoA + H(+). The enzyme catalyses N-acetyl-alpha-D-glucosamine 1-phosphate + UTP + H(+) = UDP-N-acetyl-alpha-D-glucosamine + diphosphate. It functions in the pathway nucleotide-sugar biosynthesis; UDP-N-acetyl-alpha-D-glucosamine biosynthesis; N-acetyl-alpha-D-glucosamine 1-phosphate from alpha-D-glucosamine 6-phosphate (route II): step 2/2. The protein operates within nucleotide-sugar biosynthesis; UDP-N-acetyl-alpha-D-glucosamine biosynthesis; UDP-N-acetyl-alpha-D-glucosamine from N-acetyl-alpha-D-glucosamine 1-phosphate: step 1/1. Its pathway is bacterial outer membrane biogenesis; LPS lipid A biosynthesis. In terms of biological role, catalyzes the last two sequential reactions in the de novo biosynthetic pathway for UDP-N-acetylglucosamine (UDP-GlcNAc). The C-terminal domain catalyzes the transfer of acetyl group from acetyl coenzyme A to glucosamine-1-phosphate (GlcN-1-P) to produce N-acetylglucosamine-1-phosphate (GlcNAc-1-P), which is converted into UDP-GlcNAc by the transfer of uridine 5-monophosphate (from uridine 5-triphosphate), a reaction catalyzed by the N-terminal domain. The protein is Bifunctional protein GlmU of Bifidobacterium longum subsp. infantis (strain ATCC 15697 / DSM 20088 / JCM 1222 / NCTC 11817 / S12).